A 124-amino-acid chain; its full sequence is Small ribosomal subunit protein uS12 (124 aa).

The residue at position 89 (Asp89) is a 3-methylthioaspartic acid.

It belongs to the universal ribosomal protein uS12 family. In terms of assembly, part of the 30S ribosomal subunit. Contacts proteins S8 and S17. May interact with IF1 in the 30S initiation complex.

In terms of biological role, with S4 and S5 plays an important role in translational accuracy. Interacts with and stabilizes bases of the 16S rRNA that are involved in tRNA selection in the A site and with the mRNA backbone. Located at the interface of the 30S and 50S subunits, it traverses the body of the 30S subunit contacting proteins on the other side and probably holding the rRNA structure together. The combined cluster of proteins S8, S12 and S17 appears to hold together the shoulder and platform of the 30S subunit. This chain is Small ribosomal subunit protein uS12, found in Shewanella loihica (strain ATCC BAA-1088 / PV-4).